The chain runs to 307 residues: Putative ankyrin repeat protein R229 (307 aa).

ANK repeat units follow at residues Ala135 to Val164, Asp165 to Ala194, Asp196 to Ala224, Asn226 to Ala254, Arg256 to Tyr284, and Ser286 to Asp307.

In Acanthamoeba polyphaga (Amoeba), this protein is Putative ankyrin repeat protein R229.